The sequence spans 117 residues: Large ribosomal subunit protein bL20c (117 aa).

Belongs to the bacterial ribosomal protein bL20 family.

It is found in the plastid. Its subcellular location is the chloroplast. In terms of biological role, binds directly to 23S ribosomal RNA and is necessary for the in vitro assembly process of the 50S ribosomal subunit. It is not involved in the protein synthesizing functions of that subunit. This Nasturtium officinale (Watercress) protein is Large ribosomal subunit protein bL20c.